Reading from the N-terminus, the 372-residue chain is Putative aminopeptidase SgcX (372 aa).

Residues H67 and D180 each coordinate a divalent metal cation. The Proton acceptor role is filled by E212. A divalent metal cation-binding residues include E213, D235, and H329.

This sequence belongs to the peptidase M42 family. It depends on a divalent metal cation as a cofactor.

This Salmonella typhi protein is Putative aminopeptidase SgcX (sgcX).